Consider the following 669-residue polypeptide: Hypoxia-inducible factor 3-alpha (669 aa).

The interval 1–27 (MALGLQRARSTTELRKEKSRDAARSRR) is disordered. Basic and acidic residues predominate over residues 10-27 (STTELRKEKSRDAARSRR). The 54-residue stretch at 14-67 (LRKEKSRDAARSRRSQETEVLYQLAHTLPFARGVSAHLDKASIMRLTISYLRMH) folds into the bHLH domain. The interval 77–100 (QVGAGGEPLDACYLKALEGFVMVL) is nuclear localization signal. 2 PAS domains span residues 82–154 (GEPL…LSRR) and 227–297 (PHPG…LSKG). Residues 230–274 (GSLEPPLGRGAFLSRHSLDMKFTYCDDRIAEVAGYSPDDLIGCSA) are nuclear export signal. The disordered stretch occupies residues 354–389 (EQTEQHSRRPIQRGAPSQKDTPNPGDSLDTPGPRIL). Positions 414–418 (LRRLL) match the LRRLL motif. Positions 430 to 444 (TPSTPLATRHPQSPL) are enriched in polar residues. The tract at residues 430–451 (TPSTPLATRHPQSPLSADLPDE) is disordered. The segment at 452-581 (LPVGTENVHR…TLAQSSEDED (130 aa)) is ODD. The interval 454 to 506 (VGTENVHRLFTSGKDTEAVETDLDIAQDADALDLEMLAPYISMDDDFQLNASE) is NTAD. Lys-467 participates in a covalent cross-link: Glycyl lysine isopeptide (Lys-Gly) (interchain with G-Cter in ubiquitin). The short motif at 490–497 (LAPYISMD) is the LAPYISMD element. The residue at position 492 (Pro-492) is a 4-hydroxyproline. Disordered regions lie at residues 523–600 (RARS…SPEH) and 619–669 (APGS…AQAD). Composition is skewed to low complexity over residues 530-541 (LSPPALEPSLLP) and 550-564 (SCSSPSRGDPSASSP). Residue Lys-570 forms a Glycyl lysine isopeptide (Lys-Gly) (interchain with G-Cter in ubiquitin) linkage. The segment covering 629–646 (PLLNLNEPLGLGPSLLSP) has biased composition (low complexity).

Isoform 2 interacts (via ODD domain) with VHL (via beta domain). Isoform 4 interacts with HIF1A; the interaction inhibits the binding of HIF1A to hypoxia-responsive element (HRE) and HIF1A/ARNT-dependent transcriptional activation. Isoform 4 interacts with ARNT; the interaction occurs in a HIF1A- and DNA-binding-independent manner and does not induce HIF1A/ARNT-dependent transcriptional activation. Isoform 4 interacts with EPAS1. Interacts with BAD, BCL2L2 and MCL1. In terms of processing, in normoxia, hydroxylated on Pro-492 in the oxygen-dependent degradation domain (ODD) by prolyl hydroxylase(s) (PHD). The hydroxylated proline promotes interaction with VHL, initiating rapid ubiquitination and subsequent proteasomal degradation. Ubiquitinated; ubiquitination occurs in a VHL- and oxygen-dependent pathway and subsequently targeted for proteasomal degradation. Expressed in vascular cells (at protein level). Expressed in kidney. Expressed in lung epithelial cells. Expressed in endothelial cells (venous and arterial cells from umbilical cord and aortic endothelial cells) and in vascular smooth muscle cells (aorta). Strongly expressed in the heart, placenta, and skeletal muscle, whereas a weak expression profile was found in the lung, liver, and kidney. Expressed weakly in cell renal cell carcinoma (CC-RCC) compared to normal renal cells. Expression is down-regulated in numerous kidney tumor cells compared to non tumor kidney tissues. Isoform 2 is expressed in heart, placenta, lung, liver, skeletal muscle and pancreas and in numerous cancer cell lines. Isoform 3 and isoform 4 are weakly expressed in heart, placenta, lung, liver, skeletal muscle and pancreas. Isoform 4 is expressed in fetal tissues, such as heart, brain, thymus, lung, liver, skeletal kidney and spleen. Isoform 3 is weakly expressed in fetal tissues, such as liver and kidney.

Its subcellular location is the nucleus. The protein resides in the cytoplasm. It localises to the nucleus speckle. The protein localises to the mitochondrion. Functionally, acts as a transcriptional regulator in adaptive response to low oxygen tension. Acts as a regulator of hypoxia-inducible gene expression. Functions as an inhibitor of angiogenesis in hypoxic cells of the cornea. Plays a role in the development of the cardiorespiratory system. May also be involved in apoptosis. Its function is as follows. Attenuates the ability of transcription factor HIF1A to bind to hypoxia-responsive elements (HRE) located within the enhancer/promoter of hypoxia-inducible target genes and hence inhibits HRE-driven transcriptional activation. Also inhibits hypoxia-inducible ARNT-mediated gene expression. In terms of biological role, attenuates the ability of transcription factor HIF1A to bind to hypoxia-responsive elements (HRE) located within the enhancer/promoter of hypoxia-inducible target genes and hence inhibits HRE-driven transcriptional activation. Attenuates the ability of transcription factor HIF1A and EPAS1/HIF2A to bind to hypoxia-responsive elements (HRE) located within the enhancer/promoter of hypoxia-inducible target genes and hence inhibits HRE-driven transcriptional activation. May act as a tumor suppressor and inhibits malignant cell transformation. The chain is Hypoxia-inducible factor 3-alpha from Homo sapiens (Human).